A 666-amino-acid polypeptide reads, in one-letter code: Long-chain-fatty-acid--CoA ligase ACSBG2 (666 aa).

Residues 230-238 (TSGTTGIPK), 418-423 (ELYGLS), Asp-496, and Arg-624 each bind ATP.

It belongs to the ATP-dependent AMP-binding enzyme family. Bubblegum subfamily. In terms of tissue distribution, testis-specific.

Its subcellular location is the cytoplasm. The protein resides in the membrane. The catalysed reaction is a long-chain fatty acid + ATP + CoA = a long-chain fatty acyl-CoA + AMP + diphosphate. The enzyme catalyses (5Z,8Z,11Z,14Z)-eicosatetraenoate + ATP + CoA = (5Z,8Z,11Z,14Z)-eicosatetraenoyl-CoA + AMP + diphosphate. It catalyses the reaction hexadecanoate + ATP + CoA = hexadecanoyl-CoA + AMP + diphosphate. It carries out the reaction (9Z)-octadecenoate + ATP + CoA = (9Z)-octadecenoyl-CoA + AMP + diphosphate. The catalysed reaction is (9Z,12Z)-octadecadienoate + ATP + CoA = (9Z,12Z)-octadecadienoyl-CoA + AMP + diphosphate. The enzyme catalyses tetracosanoate + ATP + CoA = tetracosanoyl-CoA + AMP + diphosphate. In terms of biological role, catalyzes the conversion of fatty acids such as long chain and very long-chain fatty acids to their active form acyl-CoAs for both synthesis of cellular lipids, and degradation via beta-oxidation. Can activate diverse saturated, monosaturated and polyunsaturated fatty acids. Has increased ability to activate oleic and linoleic acid. May play a role in spermatogenesis. The chain is Long-chain-fatty-acid--CoA ligase ACSBG2 from Homo sapiens (Human).